The primary structure comprises 120 residues: ESAT-6-like protein EsxQ (120 aa).

It belongs to the WXG100 family. ESAT-6 subfamily.

Its subcellular location is the secreted. The protein is ESAT-6-like protein EsxQ of Mycobacterium bovis (strain ATCC BAA-935 / AF2122/97).